A 166-amino-acid polypeptide reads, in one-letter code: Testis-expressed protein 51 (166 aa).

An N-terminal signal peptide occupies residues 1–15; the sequence is MLPLLIICLLPAIEG. The helical transmembrane segment at 138 to 154 threads the bilayer; the sequence is SLWAVSLSSALLLAIAG.

Its subcellular location is the membrane. The protein is Testis-expressed protein 51 of Homo sapiens (Human).